The sequence spans 248 residues: mRNA-decapping protein OPG122 (248 aa).

The region spanning 45–227 (HKRVSVSAIL…IAKYALDTAK (183 aa)) is the Nudix hydrolase domain. The Nudix box signature appears at 126-147 (GIPKRGENVPECLSREIKEEVN). E132 contributes to the Mg(2+) binding site. The Nucleophile role is filled by E141. E145 contacts Mn(2+). Position 167 (D167) interacts with Mg(2+).

Belongs to the Nudix hydrolase family. The cofactor is Mg(2+). It depends on Mn(2+) as a cofactor.

The protein localises to the host mitochondrion. Decapping enzyme that remove the protective 5'-cap from both host and viral mRNAs to commit transcripts for decay by the cellular exonuclease XRN1. Preferentially targets spliced mRNAs and since all viral genes are intronless, it preferentially targets host over viral transcripts. Acceleration of the turnover of cellular transcripts promotes the shutoff of host protein synthesis and therefore diminish the magnitude of antiviral response. In Vaccinia virus (strain Copenhagen) (VACV), this protein is mRNA-decapping protein OPG122 (OPG122).